Consider the following 210-residue polypeptide: Ribosomal RNA small subunit methyltransferase G (210 aa).

S-adenosyl-L-methionine is bound by residues G76, L81, 127–128, and R142; that span reads VE.

The protein belongs to the methyltransferase superfamily. RNA methyltransferase RsmG family.

It localises to the cytoplasm. It catalyses the reaction guanosine(527) in 16S rRNA + S-adenosyl-L-methionine = N(7)-methylguanosine(527) in 16S rRNA + S-adenosyl-L-homocysteine. Its function is as follows. Specifically methylates the N7 position of guanine in position 527 of 16S rRNA. This is Ribosomal RNA small subunit methyltransferase G from Vibrio atlanticus (strain LGP32) (Vibrio splendidus (strain Mel32)).